A 227-amino-acid chain; its full sequence is Phosphoribosylformylglycinamidine synthase subunit PurQ (227 aa).

Positions 2-226 constitute a Glutamine amidotransferase type-1 domain; that stretch reads KFAVIQFPGS…VKAWKEEQVN (225 aa). The active-site Nucleophile is the cysteine 86. Catalysis depends on residues histidine 195 and glutamate 197.

As to quaternary structure, part of the FGAM synthase complex composed of 1 PurL, 1 PurQ and 2 PurS subunits.

The protein resides in the cytoplasm. The catalysed reaction is N(2)-formyl-N(1)-(5-phospho-beta-D-ribosyl)glycinamide + L-glutamine + ATP + H2O = 2-formamido-N(1)-(5-O-phospho-beta-D-ribosyl)acetamidine + L-glutamate + ADP + phosphate + H(+). The enzyme catalyses L-glutamine + H2O = L-glutamate + NH4(+). The protein operates within purine metabolism; IMP biosynthesis via de novo pathway; 5-amino-1-(5-phospho-D-ribosyl)imidazole from N(2)-formyl-N(1)-(5-phospho-D-ribosyl)glycinamide: step 1/2. Functionally, part of the phosphoribosylformylglycinamidine synthase complex involved in the purines biosynthetic pathway. Catalyzes the ATP-dependent conversion of formylglycinamide ribonucleotide (FGAR) and glutamine to yield formylglycinamidine ribonucleotide (FGAM) and glutamate. The FGAM synthase complex is composed of three subunits. PurQ produces an ammonia molecule by converting glutamine to glutamate. PurL transfers the ammonia molecule to FGAR to form FGAM in an ATP-dependent manner. PurS interacts with PurQ and PurL and is thought to assist in the transfer of the ammonia molecule from PurQ to PurL. This is Phosphoribosylformylglycinamidine synthase subunit PurQ from Listeria monocytogenes serovar 1/2a (strain ATCC BAA-679 / EGD-e).